The primary structure comprises 176 residues: NADH-quinone oxidoreductase subunit I (176 aa).

2 consecutive 4Fe-4S ferredoxin-type domains span residues 47–77 (LTRDPDGEERCVACHLCSAACPVDCISMQAA) and 87–116 (AWFRINFSRCIFCGLCTEACPTLALQMTSE). Cys57, Cys60, Cys63, Cys67, Cys96, Cys99, Cys102, and Cys106 together coordinate [4Fe-4S] cluster.

This sequence belongs to the complex I 23 kDa subunit family. As to quaternary structure, NDH-1 is composed of 14 different subunits. Subunits NuoA, H, J, K, L, M, N constitute the membrane sector of the complex. The cofactor is [4Fe-4S] cluster.

The protein resides in the cell inner membrane. The enzyme catalyses a quinone + NADH + 5 H(+)(in) = a quinol + NAD(+) + 4 H(+)(out). NDH-1 shuttles electrons from NADH, via FMN and iron-sulfur (Fe-S) centers, to quinones in the respiratory chain. The immediate electron acceptor for the enzyme in this species is believed to be ubiquinone. Couples the redox reaction to proton translocation (for every two electrons transferred, four hydrogen ions are translocated across the cytoplasmic membrane), and thus conserves the redox energy in a proton gradient. This is NADH-quinone oxidoreductase subunit I from Syntrophotalea carbinolica (strain DSM 2380 / NBRC 103641 / GraBd1) (Pelobacter carbinolicus).